A 558-amino-acid polypeptide reads, in one-letter code: Magnesium-chelatase 60 kDa subunit (558 aa).

Disordered stretches follow at residues 234–268 and 298–325; these read MPAS…GEEM and MARG…MGRL. The segment covering 240 to 254 has biased composition (acidic residues); the sequence is APPEPEPEPPEDQPD. Residues 298 to 308 are compositionally biased toward low complexity; it reads MARGATGTGSA. The 180-residue stretch at 376-555 folds into the VWFA domain; the sequence is VLIFAVDASG…HKLSNVLGAA (180 aa).

Belongs to the Mg-chelatase subunits D/I family.

It carries out the reaction protoporphyrin IX + Mg(2+) + ATP + H2O = Mg-protoporphyrin IX + ADP + phosphate + 3 H(+). The protein operates within porphyrin-containing compound metabolism; bacteriochlorophyll biosynthesis. In terms of biological role, involved in bacteriochlorophyll biosynthesis; introduces a magnesium ion into protoporphyrin IX to yield Mg-protoporphyrin IX. This is Magnesium-chelatase 60 kDa subunit (bchD) from Cereibacter sphaeroides (strain ATCC 17023 / DSM 158 / JCM 6121 / CCUG 31486 / LMG 2827 / NBRC 12203 / NCIMB 8253 / ATH 2.4.1.) (Rhodobacter sphaeroides).